Here is a 389-residue protein sequence, read N- to C-terminus: Serpin B13 (389 aa).

The protein belongs to the serpin family. Ov-serpin subfamily.

It localises to the cytoplasm. In terms of biological role, may play a role in the proliferation or differentiation of keratinocytes. The polypeptide is Serpin B13 (Serpinb13) (Mus musculus (Mouse)).